Consider the following 168-residue polypeptide: Cell division inhibitor SulA (168 aa).

Positions 106–112 are ftsZ binding; the sequence is ALLTGNY. Residues 161 to 168 are lon protease binding; the sequence is KIHSSLYH.

The protein belongs to the SulA family. Interacts with FtsZ. Post-translationally, is rapidly cleaved and degraded by the Lon protease once DNA damage is repaired.

Functionally, component of the SOS system and an inhibitor of cell division. Accumulation of SulA causes rapid cessation of cell division and the appearance of long, non-septate filaments. In the presence of GTP, binds a polymerization-competent form of FtsZ in a 1:1 ratio, thus inhibiting FtsZ polymerization and therefore preventing it from participating in the assembly of the Z ring. This mechanism prevents the premature segregation of damaged DNA to daughter cells during cell division. The sequence is that of Cell division inhibitor SulA from Yersinia enterocolitica serotype O:8 / biotype 1B (strain NCTC 13174 / 8081).